The following is a 411-amino-acid chain: Serine/threonine transporter SstT (411 aa).

A run of 8 helical transmembrane segments spans residues 17–37 (IMVGLVAGIIVALVSPATASA), 41–61 (LGALFVGALKAVAPVLVLVLV), 79–99 (ILFLYLLGTFAAALVAVVVSF), 138–158 (ALISANYIGILAWAVGLGLAL), 189–209 (LGIFGLVASTLAETGFGALWG), 214–234 (LVVLIGCMLLVALVLNPLIVF), 295–315 (MAGAAITITVLTLAAVHTLGI), and 327–347 (VVAAVCACGASGVAGGSLLLI).

Belongs to the dicarboxylate/amino acid:cation symporter (DAACS) (TC 2.A.23) family.

The protein resides in the cell inner membrane. It catalyses the reaction L-serine(in) + Na(+)(in) = L-serine(out) + Na(+)(out). The catalysed reaction is L-threonine(in) + Na(+)(in) = L-threonine(out) + Na(+)(out). Functionally, involved in the import of serine and threonine into the cell, with the concomitant import of sodium (symport system). This Serratia proteamaculans (strain 568) protein is Serine/threonine transporter SstT.